The following is a 231-amino-acid chain: MKIKAISLDIDGTITYPNRMIHEEALQAIRKAESLGVPIMLVTGNTVQFAEAASILIGTSGPVVAEDGGAISYKKKRIFLTSMDEEWILWGELKKRFPNVKTSHTMPDRRAGLVIMRETIDVETVRKLIKELNLNLVAVDSGFAIHVKKPWINKGSGIEKACELLGLNPKEVAHVGDGENDLDAFKVVGYRIAVAQAPKILKENADYITQNEYGKGGAEAIYHILEKFGYI.

D9 (nucleophile) is an active-site residue. The Mg(2+) site is built by D9 and D11. K154 provides a ligand contact to substrate. Mg(2+)-binding residues include D177 and D181.

The protein belongs to the archaeal SPP-like hydrolase family. It depends on Mg(2+) as a cofactor.

It carries out the reaction 2-phosphoglycolate + H2O = glycolate + phosphate. Catalyzes the dephosphorylation of 2-phosphoglycolate. This chain is Phosphoglycolate phosphatase, found in Pyrococcus furiosus (strain ATCC 43587 / DSM 3638 / JCM 8422 / Vc1).